The primary structure comprises 73 residues: Antimicrobial peptide lumbricin-PG (73 aa).

The N-terminal stretch at 1–14 is a signal peptide; the sequence is MLLTISDFLFLSLT. Positions 25–48 are disordered; sequence RPWSDRKNNYSGPQFTYPPEKAPP.

The protein resides in the secreted. In terms of biological role, displays antimicrobial activity against the Gram-positive bacterium S.aureus ATCC 2592, the Gram-negative bacteria E.coli ATCC 25922 and P.aeruginosa ATCC 27853, and the fungus C.albicans ATCC 2002. Displays stronger activity against P.aeruginosa and S.aureus than E.coli. Displays very weak hemolytic activity. This chain is Antimicrobial peptide lumbricin-PG, found in Metaphire guillelmi (Earthworm).